We begin with the raw amino-acid sequence, 785 residues long: Endonuclease MutS2 (785 aa).

An ATP-binding site is contributed by 331–338; sequence GPNTGGKT. The Smr domain occupies 710 to 785; the sequence is LDLRGLYADE…GLGVTVVELA (76 aa).

Belongs to the DNA mismatch repair MutS family. MutS2 subfamily. In terms of assembly, homodimer. Binds to stalled ribosomes, contacting rRNA.

In terms of biological role, endonuclease that is involved in the suppression of homologous recombination and thus may have a key role in the control of bacterial genetic diversity. Acts as a ribosome collision sensor, splitting the ribosome into its 2 subunits. Detects stalled/collided 70S ribosomes which it binds and splits by an ATP-hydrolysis driven conformational change. Acts upstream of the ribosome quality control system (RQC), a ribosome-associated complex that mediates the extraction of incompletely synthesized nascent chains from stalled ribosomes and their subsequent degradation. Probably generates substrates for RQC. This Pelotomaculum thermopropionicum (strain DSM 13744 / JCM 10971 / SI) protein is Endonuclease MutS2.